The chain runs to 487 residues: UDP-glucosyl transferase 73CC6 (487 aa).

The active-site Proton acceptor is the histidine 17. Aspartate 114 functions as the Charge relay in the catalytic mechanism. UDP is bound by residues serine 282, tryptophan 346, alanine 347, histidine 364, asparagine 368, serine 369, glutamate 372, and tyrosine 386.

The protein belongs to the UDP-glycosyltransferase family. As to expression, mainly expressed in flowers and flower buds and, to a lesser extent, in leaves, stems and roots.

It participates in secondary metabolite biosynthesis; terpenoid biosynthesis. Functionally, component of the oleanane-type triterpene saponins (e.g. saponarioside A and saponarioside B) biosynthetic pathway, leading to the production of natural products with detergent properties used as traditional sources of soap. A glycosyltransferase that mediates the conversion of QA-di to QA-tri via the elongation of the C-3 sugar chain with a D-xylose. The sequence is that of UDP-glucosyl transferase 73CC6 from Saponaria officinalis (Common soapwort).